The primary structure comprises 441 residues: Ribosomal protein uS12 methylthiotransferase RimO (441 aa).

The MTTase N-terminal domain maps to 6–116 (PKVGFVSLGC…VMTAVHANLP (111 aa)). [4Fe-4S] cluster is bound by residues C15, C51, C80, C147, C151, and C154. The region spanning 133 to 370 (LTPQHYAYLK…MEVQESISAE (238 aa)) is the Radical SAM core domain. Residues 373–439 (RRKIGRIETV…GHDLWAAPPA (67 aa)) enclose the TRAM domain.

Belongs to the methylthiotransferase family. RimO subfamily. The cofactor is [4Fe-4S] cluster.

It is found in the cytoplasm. It carries out the reaction L-aspartate(89)-[ribosomal protein uS12]-hydrogen + (sulfur carrier)-SH + AH2 + 2 S-adenosyl-L-methionine = 3-methylsulfanyl-L-aspartate(89)-[ribosomal protein uS12]-hydrogen + (sulfur carrier)-H + 5'-deoxyadenosine + L-methionine + A + S-adenosyl-L-homocysteine + 2 H(+). In terms of biological role, catalyzes the methylthiolation of an aspartic acid residue of ribosomal protein uS12. This chain is Ribosomal protein uS12 methylthiotransferase RimO, found in Methylobacillus flagellatus (strain ATCC 51484 / DSM 6875 / VKM B-1610 / KT).